The chain runs to 806 residues: Ent-atiserene synthase KSL4, chloroplastic (806 aa).

Residues 1 to 75 (MGIVALILIK…AKLFKKNEVC (75 aa)) constitute a chloroplast transit peptide. The tract at residues 33 to 56 (ASLAGSGLPKTTPPKTASLQSHSP) is disordered. The span at 45 to 55 (PPKTASLQSHS) shows a compositional bias: polar residues. 4 residues coordinate Mg(2+): aspartate 556, aspartate 560, asparagine 700, and glutamate 708. Positions 556–560 (DDLFD) match the DDXXD motif motif.

It belongs to the terpene synthase family. Requires Mg(2+) as cofactor. Highly expressed in leaves, and, at low levels, in roots, stems and flowers.

Its subcellular location is the plastid. The protein localises to the chloroplast. It catalyses the reaction ent-copalyl diphosphate = ent-atiserene + diphosphate. Its pathway is secondary metabolite biosynthesis; terpenoid biosynthesis. In terms of biological role, involved in the biosynthesis of ent-kaurene diterpenoids natural products such as oridonin, miltiradiene, eriocalyxin B and nezukol, known to exhibit antitumor, anti-inflammatory and antibacterial activities. Catalyzes the conversion of ent-copalyl diphosphate (ent-CPP) to ent-atiserene. In Isodon rubescens (Rabdosia rubescens), this protein is Ent-atiserene synthase KSL4, chloroplastic.